The sequence spans 314 residues: Ribose-phosphate pyrophosphokinase (314 aa).

ATP-binding positions include 37–39 and 96–97; these read DGE and RQ. Mg(2+) is bound by residues H131 and D170. K194 is a catalytic residue. D-ribose 5-phosphate-binding positions include R196, D220, and 224–228; that span reads DTGGT.

The protein belongs to the ribose-phosphate pyrophosphokinase family. Class I subfamily. In terms of assembly, homohexamer. Requires Mg(2+) as cofactor.

It is found in the cytoplasm. The enzyme catalyses D-ribose 5-phosphate + ATP = 5-phospho-alpha-D-ribose 1-diphosphate + AMP + H(+). The protein operates within metabolic intermediate biosynthesis; 5-phospho-alpha-D-ribose 1-diphosphate biosynthesis; 5-phospho-alpha-D-ribose 1-diphosphate from D-ribose 5-phosphate (route I): step 1/1. In terms of biological role, involved in the biosynthesis of the central metabolite phospho-alpha-D-ribosyl-1-pyrophosphate (PRPP) via the transfer of pyrophosphoryl group from ATP to 1-hydroxyl of ribose-5-phosphate (Rib-5-P). The sequence is that of Ribose-phosphate pyrophosphokinase from Vibrio parahaemolyticus serotype O3:K6 (strain RIMD 2210633).